The following is a 241-amino-acid chain: MPLLAVNVDHVATIRQARLAKSPDPVAAAALAELGGARAIIVHLREDRRHIGDRDVHVLRETIKTRLHLEMAATEEMLGIALKRKPDMVCLVPEKRQELTTEGGLGVAGREAELAAYVAKLAEAGIPTSLFIDPDPRQIEASKAVGAAYVELHTGAFADAATPAARQKELDRLLAAIPLAKSQGLGVNLGHGLDYDNIYAFKDTPGVSEYSIGHSIVARAVLTGMVEAVSTMCAIIDGFPD.

Asn7 contributes to the 3-amino-2-oxopropyl phosphate binding site. 1-deoxy-D-xylulose 5-phosphate is bound at residue 9–10 (DH). Arg18 is a binding site for 3-amino-2-oxopropyl phosphate. His43 (proton acceptor) is an active-site residue. 1-deoxy-D-xylulose 5-phosphate contacts are provided by Arg45 and His50. Residue Glu70 is the Proton acceptor of the active site. Residue Thr100 participates in 1-deoxy-D-xylulose 5-phosphate binding. The active-site Proton donor is the His191. 3-amino-2-oxopropyl phosphate contacts are provided by residues Gly192 and 213–214 (GH).

The protein belongs to the PNP synthase family. In terms of assembly, homooctamer; tetramer of dimers.

The protein localises to the cytoplasm. It carries out the reaction 3-amino-2-oxopropyl phosphate + 1-deoxy-D-xylulose 5-phosphate = pyridoxine 5'-phosphate + phosphate + 2 H2O + H(+). Its pathway is cofactor biosynthesis; pyridoxine 5'-phosphate biosynthesis; pyridoxine 5'-phosphate from D-erythrose 4-phosphate: step 5/5. Functionally, catalyzes the complicated ring closure reaction between the two acyclic compounds 1-deoxy-D-xylulose-5-phosphate (DXP) and 3-amino-2-oxopropyl phosphate (1-amino-acetone-3-phosphate or AAP) to form pyridoxine 5'-phosphate (PNP) and inorganic phosphate. The chain is Pyridoxine 5'-phosphate synthase from Solidesulfovibrio magneticus (strain ATCC 700980 / DSM 13731 / RS-1) (Desulfovibrio magneticus).